The sequence spans 359 residues: 3-dehydroquinate synthase (359 aa).

Residues 72 to 77, 106 to 110, 130 to 131, lysine 143, lysine 152, and 170 to 173 contribute to the NAD(+) site; these read EGEIHK, GVIGD, TS, and CLKT. Zn(2+) contacts are provided by glutamate 185, histidine 248, and histidine 264.

Belongs to the sugar phosphate cyclases superfamily. Dehydroquinate synthase family. It depends on Co(2+) as a cofactor. Zn(2+) is required as a cofactor. NAD(+) serves as cofactor.

The protein resides in the cytoplasm. The enzyme catalyses 7-phospho-2-dehydro-3-deoxy-D-arabino-heptonate = 3-dehydroquinate + phosphate. Its pathway is metabolic intermediate biosynthesis; chorismate biosynthesis; chorismate from D-erythrose 4-phosphate and phosphoenolpyruvate: step 2/7. Catalyzes the conversion of 3-deoxy-D-arabino-heptulosonate 7-phosphate (DAHP) to dehydroquinate (DHQ). This is 3-dehydroquinate synthase from Dehalococcoides mccartyi (strain ATCC BAA-2100 / JCM 16839 / KCTC 5957 / BAV1).